We begin with the raw amino-acid sequence, 545 residues long: MIRVSSAVQRHAQKLIVLFSLLFGASLLMSDNGFATDIKNTNASSPVNSESTKPTKAGEVKNVVRFAKTGSFDNDTVVRLARQLAKKPYVALKDPLPESLANISYDEYRDIRFKPDSAVWKADGLPYQMQLFHRGFFFQDLIEIALVEGNQATHLSYDPNMFTAGEVLQQNLPTEDIGYSGLRVHYPLNSPSYFDELFVFQGASYFRALGKGNAYGLSARGLAIKTADPAGEEFPIFRAFWVEKPNYDTNLIVVHALLDSPSVSGAYRFSIRPGENTRMDVEAVLFPRVELSKVGLAPATSMFMHSPNGREKTDDFRPSVHDSDGLLMINGRGERLWRPLANPSTLQVSAFMDNSPQGFGLMQRERDYANYQDLEAHYEKRPSLWVEPVGNWGPGAVVLTEIPTQSEIHDNIVAFWKPAQPLAAGSEYRFSYHLNWGAQPEANPQAITVSRTASGRADIAKPTPKRLFVIDYQVQGAKPAQMPEPKVRSNAGVISNVVLRDNPANNGYRLSFEFDPGEVTLAELRAELTLQEARPVETWLYRWTL.

The N-terminal stretch at 1 to 35 (MIRVSSAVQRHAQKLIVLFSLLFGASLLMSDNGFA) is a signal peptide.

This sequence belongs to the OpgD/OpgG family.

The protein localises to the periplasm. It participates in glycan metabolism; osmoregulated periplasmic glucan (OPG) biosynthesis. Its function is as follows. Involved in the biosynthesis of osmoregulated periplasmic glucans (OPGs). The protein is Glucans biosynthesis protein G of Vibrio cholerae serotype O1 (strain ATCC 39541 / Classical Ogawa 395 / O395).